A 136-amino-acid polypeptide reads, in one-letter code: Large ribosomal subunit protein uL16c (136 aa).

This sequence belongs to the universal ribosomal protein uL16 family. As to quaternary structure, part of the 50S ribosomal subunit.

The protein localises to the plastid. Its subcellular location is the chloroplast. This is Large ribosomal subunit protein uL16c from Chlamydomonas reinhardtii (Chlamydomonas smithii).